A 122-amino-acid chain; its full sequence is Small ribosomal subunit protein uS13 (122 aa).

The tract at residues 97-122 (PVRGQRTHTNAKTRKGRSRLPIAGKK) is disordered.

It belongs to the universal ribosomal protein uS13 family. Part of the 30S ribosomal subunit. Forms a loose heterodimer with protein S19. Forms two bridges to the 50S subunit in the 70S ribosome.

Located at the top of the head of the 30S subunit, it contacts several helices of the 16S rRNA. In the 70S ribosome it contacts the 23S rRNA (bridge B1a) and protein L5 of the 50S subunit (bridge B1b), connecting the 2 subunits; these bridges are implicated in subunit movement. Contacts the tRNAs in the A and P-sites. The polypeptide is Small ribosomal subunit protein uS13 (Wolbachia pipientis wMel).